Here is a 327-residue protein sequence, read N- to C-terminus: Tartrate-resistant acid phosphatase type 5 (327 aa).

Residues 1 to 22 (MDSWVVLLGLQIIWLPLLTHGT) form the signal peptide. Fe cation is bound by residues Asp35, Asp73, Tyr76, and Asn112. Residues Asn118 and Asn149 are each glycosylated (N-linked (GlcNAc...) asparagine). Cys163 and Cys221 form a disulfide bridge. 3 residues coordinate Fe cation: His207, His242, and His244.

In terms of assembly, exists either as monomer or, after proteolytic processing, as a dimer of two chains linked by disulfide bond(s). The cofactor is Fe cation. In terms of tissue distribution, characteristic constituent of osteoclasts.

It localises to the lysosome. It carries out the reaction a phosphate monoester + H2O = an alcohol + phosphate. Its function is as follows. May play a role in the process of bone resorption. The osteoclastic trap acts on nucleotide tri- and diphosphates with higher affinity, compared with other substrates. This is Tartrate-resistant acid phosphatase type 5 (Acp5) from Mus musculus (Mouse).